A 526-amino-acid chain; its full sequence is Glutamyl-tRNA(Gln) amidotransferase subunit A, mitochondrial (526 aa).

Residues K76 and S171 each act as charge relay system in the active site. The active-site Acyl-ester intermediate is the S195.

This sequence belongs to the amidase family. GatA subfamily. As to quaternary structure, subunit of the heterotrimeric GatCAB amidotransferase (AdT) complex, composed of A (QRSL1), B (GATB) and C (GATC) subunits.

It localises to the mitochondrion. The catalysed reaction is L-glutamyl-tRNA(Gln) + L-glutamine + ATP + H2O = L-glutaminyl-tRNA(Gln) + L-glutamate + ADP + phosphate + H(+). Its function is as follows. Allows the formation of correctly charged Gln-tRNA(Gln) through the transamidation of misacylated Glu-tRNA(Gln) in the mitochondria. The reaction takes place in the presence of glutamine and ATP through an activated gamma-phospho-Glu-tRNA(Gln). The polypeptide is Glutamyl-tRNA(Gln) amidotransferase subunit A, mitochondrial (Canis lupus familiaris (Dog)).